The sequence spans 303 residues: Coenzyme PQQ synthesis protein B (303 aa).

It belongs to the PqqB family.

The protein operates within cofactor biosynthesis; pyrroloquinoline quinone biosynthesis. May be involved in the transport of PQQ or its precursor to the periplasm. The polypeptide is Coenzyme PQQ synthesis protein B (Pseudomonas fluorescens (strain SBW25)).